Here is a 161-residue protein sequence, read N- to C-terminus: Endoribonuclease YbeY (161 aa).

The Zn(2+) site is built by His120, His124, and Asp130.

This sequence belongs to the endoribonuclease YbeY family. Zn(2+) serves as cofactor.

Its subcellular location is the cytoplasm. In terms of biological role, single strand-specific metallo-endoribonuclease involved in late-stage 70S ribosome quality control and in maturation of the 3' terminus of the 16S rRNA. This chain is Endoribonuclease YbeY, found in Chlamydia muridarum (strain MoPn / Nigg).